We begin with the raw amino-acid sequence, 581 residues long: Prolactin receptor (581 aa).

Positions 1–24 are cleaved as a signal peptide; it reads MKENVASRAVFILLLFLNASLLNG. Over 25 to 234 the chain is Extracellular; the sequence is QSPPGKPKII…QIPNDFPVND (210 aa). 2 consecutive Fibronectin type-III domains span residues 27 to 127 and 129 to 229; these read PPGK…IVEP and PPAN…IPND. C36 and C46 are joined by a disulfide. N59 is a glycosylation site (N-linked (GlcNAc...) asparagine). Residues C75 and C86 are joined by a disulfide bond. N-linked (GlcNAc...) asparagine glycosylation is present at N132. Residues D211 and H212 each contribute to the Zn(2+) site. The WSXWS motif signature appears at 215–219; that stretch reads WSEWS. Residue N233 is glycosylated (N-linked (GlcNAc...) asparagine). Residues 235–258 traverse the membrane as a helical segment; sequence TTVWIFVAVLSAVICLIMVWAVAL. Residues 259–581 lie on the Cytoplasmic side of the membrane; it reads KGYSMMTCIL…PAKEAPPALP (323 aa). Residues 267-275 carry the Box 1 motif motif; that stretch reads ILPPVPGPK. 2 disordered regions span residues 321–362 and 462–502; these read EDQQ…LFSE and LKPS…QDKT. The segment covering 329 to 349 has biased composition (basic and acidic residues); sequence PSKEHMEQGVKPMHMDPDSDS.

Belongs to the type I cytokine receptor family. Type 1 subfamily. In terms of assembly, interacts with SMARCA1. Interacts with NEK3 and VAV2 and this interaction is prolactin-dependent.

Its subcellular location is the membrane. In terms of biological role, this is a receptor for the anterior pituitary hormone prolactin. This chain is Prolactin receptor (PRLR), found in Cervus elaphus (Red deer).